We begin with the raw amino-acid sequence, 168 residues long: MPGPECKWSTTETGAPCGTDDSSGRLAPVFVYGTLKTGQPNHRVLLDGAHGRAAFRGRAHTLEPYPLVIAGEHNIPRLLNLPGRGHRVFGEVYEVDERMLRFLDEFESCPDMYQRTRLHVALEGVRGPLECFVYTTATYPPEWVHLPYLDDYDSQGKHGLRYNPRENR.

The tract at residues 1-20 is disordered; the sequence is MPGPECKWSTTETGAPCGTD. Position 32 to 35 (32 to 35) interacts with substrate; sequence YGTL. Glutamate 107 acts as the Proton acceptor in catalysis.

Belongs to the gamma-glutamylcyclotransferase family. Monomer.

It catalyses the reaction epsilon-(gamma-L-glutamyl)-L-lysine = 5-oxo-L-proline + L-lysine. Its function is as follows. Contributes to degradation of proteins cross-linked by transglutaminases by degrading the cross-link between a lysine and a glutamic acid residue. Catalyzes the formation of 5-oxo-L-proline from L-gamma-glutamyl-L-epsilon-lysine. Inactive with L-gamma-glutamyl-alpha-amino acid substrates such as L-gamma-glutamyl-L-alpha-cysteine and L-gamma-glutamyl-L-alpha-alanine. The polypeptide is Gamma-glutamylaminecyclotransferase (GGACT) (Bos taurus (Bovine)).